A 309-amino-acid polypeptide reads, in one-letter code: Beta-lactamase (309 aa).

A signal peptide spans 1–28 (MMILKNKRMLKIGICVGILGLSITSLEA). Residue Ser-92 is the Acyl-ester intermediate of the active site. The active-site Proton acceptor is Glu-188. Residue 254–256 (KSG) coordinates substrate.

Belongs to the class-A beta-lactamase family.

The enzyme catalyses a beta-lactam + H2O = a substituted beta-amino acid. In terms of biological role, this protein is a beta-lactamase with a substrate specificity for penicillins. This chain is Beta-lactamase (bla), found in Bacillus thuringiensis.